The sequence spans 170 residues: Adenine phosphoribosyltransferase (170 aa).

It belongs to the purine/pyrimidine phosphoribosyltransferase family. As to quaternary structure, homodimer.

Its subcellular location is the cytoplasm. The enzyme catalyses AMP + diphosphate = 5-phospho-alpha-D-ribose 1-diphosphate + adenine. It functions in the pathway purine metabolism; AMP biosynthesis via salvage pathway; AMP from adenine: step 1/1. Catalyzes a salvage reaction resulting in the formation of AMP, that is energically less costly than de novo synthesis. The polypeptide is Adenine phosphoribosyltransferase (Acaryochloris marina (strain MBIC 11017)).